The following is a 560-amino-acid chain: Dihydroxy-acid dehydratase (560 aa).

Residue Cys50 coordinates [2Fe-2S] cluster. Asp82 is a Mg(2+) binding site. Cys123 is a [2Fe-2S] cluster binding site. Asp124 and Lys125 together coordinate Mg(2+). Lys125 is modified (N6-carboxylysine). Cys195 lines the [2Fe-2S] cluster pocket. Glu447 contacts Mg(2+). Ser473 serves as the catalytic Proton acceptor.

Belongs to the IlvD/Edd family. Homodimer. Requires [2Fe-2S] cluster as cofactor. It depends on Mg(2+) as a cofactor.

It catalyses the reaction (2R)-2,3-dihydroxy-3-methylbutanoate = 3-methyl-2-oxobutanoate + H2O. The catalysed reaction is (2R,3R)-2,3-dihydroxy-3-methylpentanoate = (S)-3-methyl-2-oxopentanoate + H2O. Its pathway is amino-acid biosynthesis; L-isoleucine biosynthesis; L-isoleucine from 2-oxobutanoate: step 3/4. The protein operates within amino-acid biosynthesis; L-valine biosynthesis; L-valine from pyruvate: step 3/4. In terms of biological role, functions in the biosynthesis of branched-chain amino acids. Catalyzes the dehydration of (2R,3R)-2,3-dihydroxy-3-methylpentanoate (2,3-dihydroxy-3-methylvalerate) into 2-oxo-3-methylpentanoate (2-oxo-3-methylvalerate) and of (2R)-2,3-dihydroxy-3-methylbutanoate (2,3-dihydroxyisovalerate) into 2-oxo-3-methylbutanoate (2-oxoisovalerate), the penultimate precursor to L-isoleucine and L-valine, respectively. The chain is Dihydroxy-acid dehydratase from Thermosynechococcus vestitus (strain NIES-2133 / IAM M-273 / BP-1).